We begin with the raw amino-acid sequence, 157 residues long: Putative electron transport protein YsaA (157 aa).

4Fe-4S ferredoxin-type domains follow at residues 2-32 (NRFI…NQDC), 48-80 (KDHC…REHG), 80-109 (GHIF…VVSS), and 112-144 (KARA…CMDV). C12, C15, C18, C22, C58, C61, C66, C70, C89, C92, C95, C99, C118, C121, C130, and C134 together coordinate [4Fe-4S] cluster.

The protein is Putative electron transport protein YsaA (ysaA) of Escherichia coli (strain K12).